Consider the following 279-residue polypeptide: MEKNCGSGQSKLKALRMHMYFEVDFQEQAQHYQAVLHSRGVTVDLQPIEKLNARFLRLNPDLALCVDENGLWLSANGMKMQPDWKAEIPRLKRASLKSEMIARACQLGEKPVLVDATAGLGHDSLLMAYLGAQIQLVERHPILFTLLEDSKAQAQHDPFLSQFMDRIQLIFADSASYLQQLDQEEKTVDVVYLDPMFPQRDQNQQAIKKQAQVKKQMQLLHLLLPEDGEMDLGDHLLELAKKVAKRVIVKRPRHAIFLANQEPAHQWQGDACRFDAYFQ.

Residues 138-139 and Asp194 each bind S-adenosyl-L-methionine; that span reads ER.

The protein belongs to the methyltransferase superfamily. RsmJ family.

It localises to the cytoplasm. The catalysed reaction is guanosine(1516) in 16S rRNA + S-adenosyl-L-methionine = N(2)-methylguanosine(1516) in 16S rRNA + S-adenosyl-L-homocysteine + H(+). In terms of biological role, specifically methylates the guanosine in position 1516 of 16S rRNA. This Acinetobacter baumannii (strain AYE) protein is Ribosomal RNA small subunit methyltransferase J.